Here is a 115-residue protein sequence, read N- to C-terminus: MNFALILMTNTLLALLLMIITFWLPQLNSYMEKTNPYECGFDPVSPARIPFSMKFFLVAITFLLFDLEIALLLPLPWALQTTNLPLMVMSSLLLIIILTLSLAYEWLQKGLDWTE.

A run of 3 helical transmembrane segments spans residues 3–23 (FALILMTNTLLALLLMIITFW), 55–75 (FFLVAITFLLFDLEIALLLPL), and 84–104 (LPLMVMSSLLLIIILTLSLAY).

It belongs to the complex I subunit 3 family. Core subunit of respiratory chain NADH dehydrogenase (Complex I) which is composed of 45 different subunits. Interacts with TMEM186. Interacts with TMEM242.

The protein resides in the mitochondrion inner membrane. It carries out the reaction a ubiquinone + NADH + 5 H(+)(in) = a ubiquinol + NAD(+) + 4 H(+)(out). In terms of biological role, core subunit of the mitochondrial membrane respiratory chain NADH dehydrogenase (Complex I) which catalyzes electron transfer from NADH through the respiratory chain, using ubiquinone as an electron acceptor. Essential for the catalytic activity of complex I. This chain is NADH-ubiquinone oxidoreductase chain 3, found in Gorilla gorilla gorilla (Western lowland gorilla).